Consider the following 205-residue polypeptide: MNWPLALGIWAASYLAGSLPAGYLAGRRLKNIDIREFGSGSTGATNVLRTLGRGPAAAVLLFDVFKGLFAVWLARTLAGGEDAGAWIVLGAGLAAIVGHSWPVWLAFRGGKSVAVSVGLLLGMHWPVALTVAAVWGVCFAVTRIVSFASIVAAAATPLCFYLWRAPLPFTLFGLLGGIYIVWRHRGNIERLLQGTEPKIGDPAAH.

Transmembrane regions (helical) follow at residues 5–25, 54–74, 87–107, 117–137, 138–158, and 162–182; these read LALG…GYLA, GPAA…VWLA, IVLG…WLAF, VGLL…VWGV, CFAV…ATPL, and LWRA…YIVW.

Belongs to the PlsY family. As to quaternary structure, probably interacts with PlsX.

The protein localises to the cell inner membrane. It catalyses the reaction an acyl phosphate + sn-glycerol 3-phosphate = a 1-acyl-sn-glycero-3-phosphate + phosphate. It participates in lipid metabolism; phospholipid metabolism. Functionally, catalyzes the transfer of an acyl group from acyl-phosphate (acyl-PO(4)) to glycerol-3-phosphate (G3P) to form lysophosphatidic acid (LPA). This enzyme utilizes acyl-phosphate as fatty acyl donor, but not acyl-CoA or acyl-ACP. The protein is Glycerol-3-phosphate acyltransferase of Gloeobacter violaceus (strain ATCC 29082 / PCC 7421).